The following is a 112-amino-acid chain: Class I hydrophobin 7 (112 aa).

An N-terminal signal peptide occupies residues 1–23; it reads MFARQATSVSAFLVLTLSLFAAA. Intrachain disulfides connect Cys-36–Cys-93, Cys-43–Cys-87, Cys-44–Cys-74, and Cys-94–Cys-107. An N-linked (GlcNAc...) asparagine glycan is attached at Asn-96.

This sequence belongs to the fungal hydrophobin family. Self-assembles to form functional amyloid fibrils called rodlets. Self-assembly into fibrillar rodlets occurs spontaneously at hydrophobic:hydrophilic interfaces and the rodlets further associate laterally to form amphipathic monolayers.

It is found in the secreted. The protein localises to the cell wall. In terms of biological role, aerial growth, conidiation, and dispersal of filamentous fungi in the environment rely upon a capability of their secreting small amphipathic proteins called hydrophobins (HPBs) with low sequence identity. Class I can self-assemble into an outermost layer of rodlet bundles on aerial cell surfaces, conferring cellular hydrophobicity that supports fungal growth, development and dispersal; whereas Class II form highly ordered films at water-air interfaces through intermolecular interactions but contribute nothing to the rodlet structure. The polypeptide is Class I hydrophobin 7 (Flammulina velutipes (Agaricus velutipes)).